The sequence spans 382 residues: Protein shisa-9A (382 aa).

The N-terminal stretch at 1 to 26 is a signal peptide; the sequence is MKWTVLLLEYFLVKVLVLLYSADGEA. Over 27–132 the chain is Extracellular; the sequence is QQLEGFIMLS…DPRHDPTKDK (106 aa). An N-linked (GlcNAc...) asparagine glycan is attached at asparagine 39. The chain crosses the membrane as a helical span at residues 133–153; it reads TNLIVYIICGVVAIMALVGIF. The Cytoplasmic portion of the chain corresponds to 154-382; sequence TKLGLEKAHR…VTNSKAEVTV (229 aa).

Belongs to the shisa family. SHISA9 subfamily. As to quaternary structure, component of some AMPA receptors (ionotropic glutamate receptors) complex.

The protein resides in the cell projection. It is found in the dendritic spine membrane. The protein localises to the synapse. Regulator of short-term neuronal synaptic plasticity in the dentate gyrus. Associates with AMPA receptors (ionotropic glutamate receptors) in synaptic spines and promotes AMPA receptor desensitization at excitatory synapses. The sequence is that of Protein shisa-9A (shisa9a) from Danio rerio (Zebrafish).